The sequence spans 340 residues: Ketol-acid reductoisomerase (NADP(+)) (340 aa).

Residues 1–183 (MAITVYYDKD…GGGRTGIIET (183 aa)) enclose the KARI N-terminal Rossmann domain. Residues 26-29 (FGSQ), Arg49, Ser52, Ser54, and 84-87 (DEIQ) each bind NADP(+). His109 is a catalytic residue. Residue Gly135 participates in NADP(+) binding. Residues 184 to 329 (TFKAETETDL…RNLRAMMPWI (146 aa)) enclose the KARI C-terminal knotted domain. Residues Asp192, Glu196, Glu228, and Glu232 each coordinate Mg(2+). Residue Ser253 participates in substrate binding.

Belongs to the ketol-acid reductoisomerase family. Requires Mg(2+) as cofactor.

It carries out the reaction (2R)-2,3-dihydroxy-3-methylbutanoate + NADP(+) = (2S)-2-acetolactate + NADPH + H(+). The catalysed reaction is (2R,3R)-2,3-dihydroxy-3-methylpentanoate + NADP(+) = (S)-2-ethyl-2-hydroxy-3-oxobutanoate + NADPH + H(+). The protein operates within amino-acid biosynthesis; L-isoleucine biosynthesis; L-isoleucine from 2-oxobutanoate: step 2/4. It functions in the pathway amino-acid biosynthesis; L-valine biosynthesis; L-valine from pyruvate: step 2/4. Functionally, involved in the biosynthesis of branched-chain amino acids (BCAA). Catalyzes an alkyl-migration followed by a ketol-acid reduction of (S)-2-acetolactate (S2AL) to yield (R)-2,3-dihydroxy-isovalerate. In the isomerase reaction, S2AL is rearranged via a Mg-dependent methyl migration to produce 3-hydroxy-3-methyl-2-ketobutyrate (HMKB). In the reductase reaction, this 2-ketoacid undergoes a metal-dependent reduction by NADPH to yield (R)-2,3-dihydroxy-isovalerate. The protein is Ketol-acid reductoisomerase (NADP(+)) of Campylobacter jejuni (strain RM1221).